Reading from the N-terminus, the 138-residue chain is Ribulose bisphosphate carboxylase small subunit (138 aa).

The protein belongs to the RuBisCO small chain family. In terms of assembly, heterohexadecamer of 8 large and 8 small subunits.

It localises to the plastid. The protein localises to the chloroplast. Functionally, ruBisCO catalyzes two reactions: the carboxylation of D-ribulose 1,5-bisphosphate, the primary event in carbon dioxide fixation, as well as the oxidative fragmentation of the pentose substrate in the photorespiration process. Both reactions occur simultaneously and in competition at the same active site. Although the small subunit is not catalytic it is essential for maximal activity. Carbon dioxide and oxygen bind in the same pocket of the enzyme in a similar manner. In Galdieria sulphuraria (Red alga), this protein is Ribulose bisphosphate carboxylase small subunit.